We begin with the raw amino-acid sequence, 228 residues long: Eukaryotic translation initiation factor 4E-1 (228 aa).

EIF4G-binding stretches follow at residues 53–56 (HLLE) and 63–99 (FDTP…NNIH). MRNA contacts are provided by residues 71 to 76 (KQDDWG), Lys-103, and 121 to 122 (WE). Cys-126 and Cys-164 form a disulfide bridge. The interval 147–156 (YTLLAMIGEQ) is EIF4G-binding. Residues 171–176 (RGRAEK) and 216–220 (RKLDR) each bind mRNA.

This sequence belongs to the eukaryotic initiation factor 4E family. In terms of assembly, EIF4F is a multi-subunit complex, the composition of which varies with external and internal environmental conditions. It is composed of at least EIF4A, EIF4E and EIF4G. EIF4E is also known to interact with other partners. In higher plants two isoforms of EIF4F have been identified, named isoform EIF4F and isoform EIF(iso)4F. Isoform EIF4F has subunits p220 and p26, whereas isoform EIF(iso)4F has subunits p82 and p28. (Microbial infection) Interacts with potyvirus viral genome-linked protein (VPg); this interaction is possible in susceptible hosts but impaired in resistant plants. According to the redox status, the Cys-126-Cys-164 disulfide bridge may have a role in regulating protein function by affecting its ability to bind capped mRNA.

It is found in the nucleus. It localises to the cytoplasm. Component of the protein complex eIF4F, which is involved in the recognition of the mRNA cap, ATP-dependent unwinding of 5'-terminal secondary structure and recruitment of mRNA to the ribosome. Recognizes and binds the 7-methylguanosine-containing mRNA cap during an early step in the initiation of protein synthesis and facilitates ribosome binding by inducing the unwinding of the mRNAs secondary structures. Key component of recessive resistance to potyviruses. Its function is as follows. (Microbial infection) Susceptibility host factor required for viral infection by recruiting viral RNAs to the host ribosomal complex via an interaction with viral genome-linked protein (VPg). Also seems to be involved in virus movement from cell-to-cell. This is Eukaryotic translation initiation factor 4E-1 from Pisum sativum (Garden pea).